A 432-amino-acid polypeptide reads, in one-letter code: Malate dehydrogenase [NADP], chloroplastic (432 aa).

The N-terminal 40 residues, 1–40 (MGLSTVYSPAGPRLVPAPLGRCRSAQPRRPRRAPLATVRC), are a transit peptide targeting the chloroplast. Residues 18-37 (PLGRCRSAQPRRPRRAPLAT) form a disordered region. Cys67 and Cys72 are joined by a disulfide. 96–102 (GAAGMIS) is a binding site for NADP(+). The substrate site is built by Arg177 and Arg183. Residue Asn190 coordinates NADP(+). Gln197 provides a ligand contact to NAD(+). 214-216 (VGN) lines the NADP(+) pocket. 2 residues coordinate substrate: Asn216 and Arg247. The Proton acceptor role is filled by His272. The cysteines at positions 408 and 420 are disulfide-linked.

The protein belongs to the LDH/MDH superfamily. MDH type 2 family. As to quaternary structure, homodimer.

The protein localises to the plastid. The protein resides in the chloroplast. It catalyses the reaction (S)-malate + NADP(+) = oxaloacetate + NADPH + H(+). Its activity is regulated as follows. Chloroplast NADP-MDH is activated upon illumination. In order to be enzymatically active, disulfide bridges on the protein must be reduced by thioredoxin which receives electrons from ferredoxin and the electron transport system of photosynthesis. Its function is as follows. The chloroplastic, NADP-dependent form is essential for the photosynthesis C4 cycle, which allows plants to circumvent the problem of photorespiration. In C4 plants, NADP-MDH activity acts to convert oxaloacetate to malate in chloroplasts of mesophyll cells for transport to the bundle sheath cells. This chain is Malate dehydrogenase [NADP], chloroplastic, found in Zea mays (Maize).